A 485-amino-acid polypeptide reads, in one-letter code: 3-isopropylmalate dehydratase large subunit (485 aa).

Positions 367, 427, and 430 each coordinate [4Fe-4S] cluster. The segment covering 439-451 has biased composition (polar residues); it reads SPGQRAASTSNRN. The tract at residues 439 to 462 is disordered; it reads SPGQRAASTSNRNFEGRQGKGGRT.

It belongs to the aconitase/IPM isomerase family. LeuC type 1 subfamily. Heterodimer of LeuC and LeuD. [4Fe-4S] cluster serves as cofactor.

It catalyses the reaction (2R,3S)-3-isopropylmalate = (2S)-2-isopropylmalate. It functions in the pathway amino-acid biosynthesis; L-leucine biosynthesis; L-leucine from 3-methyl-2-oxobutanoate: step 2/4. Its function is as follows. Catalyzes the isomerization between 2-isopropylmalate and 3-isopropylmalate, via the formation of 2-isopropylmaleate. The chain is 3-isopropylmalate dehydratase large subunit from Actinoplanes teichomyceticus.